The following is a 368-amino-acid chain: tRNA-specific 2-thiouridylase MnmA (368 aa).

ATP is bound by residues 11 to 18 (GMSGGVDS) and Met37. Residues 97–99 (NPD) form an interaction with target base in tRNA region. Cys102 acts as the Nucleophile in catalysis. The cysteines at positions 102 and 199 are disulfide-linked. Gly127 contributes to the ATP binding site. The segment at 149-151 (KDQ) is interaction with tRNA. Cys199 functions as the Cysteine persulfide intermediate in the catalytic mechanism. Residues 311 to 312 (RY) form an interaction with tRNA region.

Belongs to the MnmA/TRMU family. As to quaternary structure, interacts with TusE.

The protein resides in the cytoplasm. The enzyme catalyses S-sulfanyl-L-cysteinyl-[protein] + uridine(34) in tRNA + AH2 + ATP = 2-thiouridine(34) in tRNA + L-cysteinyl-[protein] + A + AMP + diphosphate + H(+). Its function is as follows. Catalyzes the 2-thiolation of uridine at the wobble position (U34) of tRNA(Lys), tRNA(Glu) and tRNA(Gln), leading to the formation of s(2)U34, the first step of tRNA-mnm(5)s(2)U34 synthesis. Sulfur is provided by IscS, via a sulfur-relay system. Binds ATP and its substrate tRNAs. The protein is tRNA-specific 2-thiouridylase MnmA of Escherichia coli O6:H1 (strain CFT073 / ATCC 700928 / UPEC).